We begin with the raw amino-acid sequence, 490 residues long: Auxin transporter-like protein 5 (490 aa).

Residues 1-55 (MEMANDKVAETVIVGNYVEMESEGKPPQDIKSKLSNFLWHGGSAYDAWFSCASNQ) lie on the Cytoplasmic side of the membrane. A helical membrane pass occupies residues 56–73 (VAQVLLTLPYSFSQLGML). Residues 74–75 (SG) are Extracellular-facing. Residues 76 to 96 (ILFQLFYGILGSWTAYLISIL) form a helical membrane-spanning segment. The Cytoplasmic portion of the chain corresponds to 97 to 132 (YVEYRTRKEREKVNFRSHVIQWFEVLDGLLGKHWRN). A helical transmembrane segment spans residues 133–153 (VGLGFNCTFLLFGSVIQLIAC). At 154-168 (ASNIYYINDNLDKRT) the chain is on the extracellular side. The chain crosses the membrane as a helical span at residues 169–189 (WTYIFGACCATTVFIPSFHNY). Residue arginine 190 is a topological domain, cytoplasmic. The chain crosses the membrane as a helical span at residues 191–211 (IWSFLGLVMTTYTAWYLTIAA). Residues 212 to 227 (VLHGQVEGVKHSGPNK) are Extracellular-facing. Residues 228 to 248 (IILYFTGATNILYTFGGHAVT) traverse the membrane as a helical segment. The Cytoplasmic segment spans residues 249–262 (VEIMHAMWKPQKFK). A helical membrane pass occupies residues 263–283 (AIYLLATLYVLTLTIPSATAV). Residues 284–310 (YWAFGDMLLNHSNAFALLPKSPFRDMA) are Extracellular-facing. An N-linked (GlcNAc...) asparagine glycan is attached at asparagine 293. A helical transmembrane segment spans residues 311-331 (VILMLIHQFITFGFACTPLYF). At 332 to 352 (VWEKTVGMHECKSLCKRALVR) the chain is on the cytoplasmic side. The helical transmembrane segment at 353–373 (LPVVIPIWFLAIIFPFFGPIN) threads the bilayer. Topologically, residues 374 to 376 (STV) are extracellular. Residues 377–397 (GSLLVSFTVYIIPALAHIFTF) traverse the membrane as a helical segment. Residues 398–420 (KSSSARQNAVEQPPKFVGRWVGT) are Cytoplasmic-facing. A helical transmembrane segment spans residues 421 to 441 (FVINVFIVVWVLIVGFGFGGW). Residues 442–490 (ASMVNFVHQIDTFGLFTKCYQCPPPTPSVPTMPPHQMNATAPSPHHHHH) are Extracellular-facing. Residue asparagine 479 is glycosylated (N-linked (GlcNAc...) asparagine).

This sequence belongs to the amino acid/polyamine transporter 2 family. Amino acid/auxin permease (AAAP) (TC 2.A.18.1) subfamily. As to expression, shoots and roots of nodulating plants, at low levels.

Its subcellular location is the cell membrane. Carrier protein involved in proton-driven auxin influx. Mediates the formation of auxin gradient from developing leaves (site of auxin biosynthesis) to tips by contributing to the loading of auxin in vascular tissues and facilitating acropetal (base to tip) auxin transport within inner tissues of the root apex, and basipetal (tip to base) auxin transport within outer tissues of the root apex. May be involved in lateral roots and nodules formation. The polypeptide is Auxin transporter-like protein 5 (LAX5) (Medicago truncatula (Barrel medic)).